Here is a 509-residue protein sequence, read N- to C-terminus: Maturase K (509 aa).

The protein belongs to the intron maturase 2 family. MatK subfamily.

Its subcellular location is the plastid. The protein localises to the chloroplast. In terms of biological role, usually encoded in the trnK tRNA gene intron. Probably assists in splicing its own and other chloroplast group II introns. The protein is Maturase K of Portulaca oleracea (Common purslane).